A 338-amino-acid polypeptide reads, in one-letter code: Pyridoxal 5'-phosphate synthase subunit PdxS (338 aa).

Asp-66 lines the D-ribose 5-phosphate pocket. Catalysis depends on Lys-123, which acts as the Schiff-base intermediate with D-ribose 5-phosphate. Residue Gly-195 coordinates D-ribose 5-phosphate. Lys-207 provides a ligand contact to D-glyceraldehyde 3-phosphate. D-ribose 5-phosphate contacts are provided by residues Gly-256 and 277–278 (GS).

It belongs to the PdxS/SNZ family. As to quaternary structure, in the presence of PdxT, forms a dodecamer of heterodimers.

It catalyses the reaction aldehydo-D-ribose 5-phosphate + D-glyceraldehyde 3-phosphate + L-glutamine = pyridoxal 5'-phosphate + L-glutamate + phosphate + 3 H2O + H(+). It functions in the pathway cofactor biosynthesis; pyridoxal 5'-phosphate biosynthesis. Its function is as follows. Catalyzes the formation of pyridoxal 5'-phosphate from ribose 5-phosphate (RBP), glyceraldehyde 3-phosphate (G3P) and ammonia. The ammonia is provided by the PdxT subunit. Can also use ribulose 5-phosphate and dihydroxyacetone phosphate as substrates, resulting from enzyme-catalyzed isomerization of RBP and G3P, respectively. In Saccharolobus islandicus (strain Y.N.15.51 / Yellowstone #2) (Sulfolobus islandicus), this protein is Pyridoxal 5'-phosphate synthase subunit PdxS.